We begin with the raw amino-acid sequence, 78 residues long: Acyl carrier protein (78 aa).

The region spanning 1-76 (MALFEDIQAV…DVVKYIEDNK (76 aa)) is the Carrier domain. S36 bears the O-(pantetheine 4'-phosphoryl)serine mark.

Belongs to the acyl carrier protein (ACP) family. Post-translationally, 4'-phosphopantetheine is transferred from CoA to a specific serine of apo-ACP by AcpS. This modification is essential for activity because fatty acids are bound in thioester linkage to the sulfhydryl of the prosthetic group.

It is found in the cytoplasm. Its pathway is lipid metabolism; fatty acid biosynthesis. In terms of biological role, carrier of the growing fatty acid chain in fatty acid biosynthesis. This chain is Acyl carrier protein, found in Helicobacter pylori (strain ATCC 700392 / 26695) (Campylobacter pylori).